Consider the following 146-residue polypeptide: Ribosome maturation factor RimP (146 aa).

It belongs to the RimP family.

The protein localises to the cytoplasm. In terms of biological role, required for maturation of 30S ribosomal subunits. The polypeptide is Ribosome maturation factor RimP (Helicobacter pylori (strain J99 / ATCC 700824) (Campylobacter pylori J99)).